The chain runs to 194 residues: Probable RNA polymerase sigma factor HI_1459 (194 aa).

A Polymerase core binding motif is present at residues 45-58; that stretch reads DLVQEAFLSAFKNL. The segment at residues 161–180 is a DNA-binding region (H-T-H motif); that stretch reads SEEICQETHLTSSNLHTTLY.

This sequence belongs to the sigma-70 factor family. ECF subfamily.

The protein is Probable RNA polymerase sigma factor HI_1459 of Haemophilus influenzae (strain ATCC 51907 / DSM 11121 / KW20 / Rd).